We begin with the raw amino-acid sequence, 223 residues long: Adenine phosphoribosyltransferase (223 aa).

This sequence belongs to the purine/pyrimidine phosphoribosyltransferase family. In terms of assembly, homodimer.

It localises to the cytoplasm. The enzyme catalyses AMP + diphosphate = 5-phospho-alpha-D-ribose 1-diphosphate + adenine. Its pathway is purine metabolism; AMP biosynthesis via salvage pathway; AMP from adenine: step 1/1. Its function is as follows. Catalyzes a salvage reaction resulting in the formation of AMP, that is energically less costly than de novo synthesis. The sequence is that of Adenine phosphoribosyltransferase from Mycobacterium bovis (strain ATCC BAA-935 / AF2122/97).